Consider the following 1667-residue polypeptide: Androglobin (1667 aa).

Basic residues predominate over residues 1-11 (MASKQTKKKEV). Disordered stretches follow at residues 1–45 (MASK…KGKF), 347–387 (SLTT…KFSL), and 540–566 (GSDLPSVSETDETATHSQTDLSQITKA). The 342-residue stretch at 70-411 (KDKTGKSPVF…SLSDCSSAIQ (342 aa)) folds into the Calpain catalytic domain. Positions 353-384 (APEKSDKVPKEKADARDIGKKRSKDGEKEKFK) are enriched in basic and acidic residues. Over residues 554–566 (THSQTDLSQITKA) the composition is skewed to polar residues. A Globin; C-terminal part domain is found at 763 to 890 (HICSMVSFVI…EEVSLVEWLD (128 aa)). Gln792 and His824 together coordinate heme b. Residues 906 to 935 (EVAAAIKIQAMWRGTYVRLLMKARIPDTKE) form the IQ domain. The Globin; N-terminal part domain occupies 936–968 (NISVADTLQKVWAVLEMNLEQYAVSLLRLMFKS). Disordered regions lie at residues 1297–1355 (INLG…QQED) and 1420–1522 (TSDA…RSPT). Residues 1301 to 1315 (SPDSHTISEGQKSSV) are compositionally biased toward polar residues. Basic and acidic residues-rich tracts occupy residues 1325-1340 (EKSSEKEKTAKEKQAP) and 1433-1450 (TKPKEEVETAARGVKEPN). The span at 1451-1468 (SKNSAGSESKEMTQTGSG) shows a compositional bias: polar residues. The segment covering 1487-1498 (STSSESGGVSSP) has biased composition (low complexity). Basic and acidic residues predominate over residues 1499 to 1511 (GKEEREQSTRKEN). Over residues 1512-1522 (IQTGPRTRSPT) the composition is skewed to polar residues. Residues 1588-1629 (QEERLKLKDEVLDMYKEMQDSLDEARQKIFDIREEYRNKLLE) adopt a coiled-coil conformation. Positions 1646–1667 (KLETEKMTPAPDTQKKKKGKKK) are disordered.

This sequence in the central section; belongs to the globin family. The protein in the N-terminal section; belongs to the peptidase C2 family. As to quaternary structure, interacts with septin SEPT10; contributes to in vitro proteolytic cleavage of SEPT10 in a calmodulin-dependent manner. Interacts with CFAP69. Interacts with SPEF2. May interact with calmodulin.

The protein resides in the cell projection. It is found in the cilium. It localises to the flagellum. Functionally, probable chimeric globin with a bis-histidyl six-coordinate heme-iron atom through which it could bind dioxygen, carbon monoxide and nitric oxide. Required for sperm flagellum formation and maturation of elongating spermatids, thus playing an essential role in male fertility. This chain is Androglobin, found in Homo sapiens (Human).